Here is a 374-residue protein sequence, read N- to C-terminus: Pectate lyase 2 (374 aa).

The first 22 residues, 1 to 22 (MKYLLPTAATGLLLLAAQPAVA), serve as a signal peptide directing secretion. Cys93 and Cys176 are joined by a disulfide. Ca(2+) is bound by residues Asp150, Asp152, Glu187, and Asp191. Residue Arg239 is part of the active site. An intrachain disulfide couples Cys350 to Cys373.

Belongs to the polysaccharide lyase 1 family. PLADES subfamily. Requires Ca(2+) as cofactor.

The protein resides in the secreted. The enzyme catalyses Eliminative cleavage of (1-&gt;4)-alpha-D-galacturonan to give oligosaccharides with 4-deoxy-alpha-D-galact-4-enuronosyl groups at their non-reducing ends.. Its pathway is glycan metabolism; pectin degradation; 2-dehydro-3-deoxy-D-gluconate from pectin: step 2/5. Involved in maceration and soft-rotting of plant tissue. This Pectobacterium atrosepticum (strain SCRI 1043 / ATCC BAA-672) (Erwinia carotovora subsp. atroseptica) protein is Pectate lyase 2 (pel2).